The sequence spans 87 residues: Small ribosomal subunit protein eS21 (87 aa).

Belongs to the eukaryotic ribosomal protein eS21 family. In terms of assembly, component of the small ribosomal subunit. Mature ribosomes consist of a small (40S) and a large (60S) subunit. The 40S subunit contains about 33 different proteins and 1 molecule of RNA (18S). The 60S subunit contains about 49 different proteins and 3 molecules of RNA (25S, 5.8S and 5S).

The protein resides in the cytoplasm. Its function is as follows. Required for the processing of the 20S rRNA-precursor to mature 18S rRNA in a late step of the maturation of 40S ribosomal subunits. Has a physiological role leading to 18S rRNA stability. The sequence is that of Small ribosomal subunit protein eS21 (RPS21) from Candida albicans (Yeast).